The chain runs to 197 residues: Recombination protein RecR (197 aa).

The C4-type zinc finger occupies 57 to 72 (CSVCFAITEDDPCWIC). The 96-residue stretch at 79-174 (GTICVVEEPQ…KVTRLAHGIP (96 aa)) folds into the Toprim domain.

The protein belongs to the RecR family.

May play a role in DNA repair. It seems to be involved in an RecBC-independent recombinational process of DNA repair. It may act with RecF and RecO. The chain is Recombination protein RecR from Geobacter sp. (strain M21).